Reading from the N-terminus, the 154-residue chain is Ribosomal RNA large subunit methyltransferase H (154 aa).

An S-adenosyl-L-methionine-binding site is contributed by G102.

The protein belongs to the RNA methyltransferase RlmH family. Homodimer.

Its subcellular location is the cytoplasm. The catalysed reaction is pseudouridine(1915) in 23S rRNA + S-adenosyl-L-methionine = N(3)-methylpseudouridine(1915) in 23S rRNA + S-adenosyl-L-homocysteine + H(+). Specifically methylates the pseudouridine at position 1915 (m3Psi1915) in 23S rRNA. The chain is Ribosomal RNA large subunit methyltransferase H from Phenylobacterium zucineum (strain HLK1).